Consider the following 697-residue polypeptide: Elongation factor G (697 aa).

In terms of domain architecture, tr-type G spans 8 to 283 (ERCRNIGIMA…AVVDYLPSPL (276 aa)). GTP contacts are provided by residues 17–24 (AHIDAGKT), 81–85 (DTPGH), and 135–138 (NKID).

This sequence belongs to the TRAFAC class translation factor GTPase superfamily. Classic translation factor GTPase family. EF-G/EF-2 subfamily.

The protein localises to the cytoplasm. Its function is as follows. Catalyzes the GTP-dependent ribosomal translocation step during translation elongation. During this step, the ribosome changes from the pre-translocational (PRE) to the post-translocational (POST) state as the newly formed A-site-bound peptidyl-tRNA and P-site-bound deacylated tRNA move to the P and E sites, respectively. Catalyzes the coordinated movement of the two tRNA molecules, the mRNA and conformational changes in the ribosome. This chain is Elongation factor G, found in Koribacter versatilis (strain Ellin345).